The sequence spans 546 residues: MATLPQKDPGYIVIDVNAGTPDKPDPRLPSMKQGFNRRWIGTNIDFVYVVYTPQGACTALDRAMEKCSPGTVRIVSGGHCYEDFVFDECVKAIINVTGLVESGYDDDRGYFVSSGDTNWGSFKTLFRDHGRVLPGGSCYSVGLGGHIVGGGDGILARLHGLPVDWLSGVEVVVKPVLTEDSVLKYVHKDSEGDDGDLFWAHTGGGGGNFGIITKYYFKDLPMSPRGVIASNLHFSWDGFTRDALQDLLTKYFKLARCDWKNTVGKFQIFHQAAEEFVMYLYTSYSNDAEREVAQDRHYHLEADIEQIYKTCEPTKALGGHAGWAPFPVRPRKRHTSKTSYIHDETMDYPFYALTETINGSGPNQRGKYKSAYMIKDFPDLQIDVIWKYLTEVPDGLTSAEMKDALLQVDMFGGEIHNVAWDATAVAQRKYIIKLQYQTYWQEEDKDAVNLKWIRDFYEEMYEPYGGVPDPNTQVESGKGVFEGCYFNYPDVDLNNWKNGKYGALELYFLGNLNRLIKAKKLWDPNEIFTNKQSIPTKSLKEYKQTK.

The FAD-binding PCMH-type domain maps to 40-222 (IGTNIDFVYV…TKYYFKDLPM (183 aa)). Residues 79–138 (HCYEDFVFDECVKAIINVTGLVESGYDDDRGYFVSSGDTNWGSFKTLFRDHGRVLPGGSC) constitute a cross-link (6-(S-cysteinyl)-8alpha-(pros-histidyl)-FAD (His-Cys)). N-linked (GlcNAc...) asparagine glycosylation is found at asparagine 95 and asparagine 358.

The protein belongs to the oxygen-dependent FAD-linked oxidoreductase family. As to quaternary structure, homodimer. Requires FAD as cofactor. Cleaved into 40 kDa and 29 kDa cleavage products, but the 2 polypeptide chains do not separate and seem to be physically linked together. Post-translationally, the FAD cofactor is bound via a bicovalent 6-S-cysteinyl, 8alpha-N1-histidyl FAD linkage.

It carries out the reaction beta-D-glucose + O2 = D-glucono-1,5-lactone + H2O2. The enzyme catalyses D-galactose + O2 = D-galactono-1,5-lactone + H2O2. The catalysed reaction is D-maltose + O2 = D-maltobiono-1,5-lactone + H2O2. It catalyses the reaction D-cellobiose + O2 = D-cellobiono-1,5-lactone + H2O2. It carries out the reaction beta-lactose + O2 = lactobiono-1,5-lactone + H2O2. Functionally, catalyzes the selective oxidation of C1 hydroxyl moieties on mono- and disaccharides with concomitant reduction of molecular oxygen to hydrogen peroxide. This results in the formation of the corresponding lactones, which typically undergo spontaneous hydrolysis. Hexose oxidase is able to oxidize a variety of substrates including D-glucose, D-galactose, maltose, cellobiose, and lactose. This chain is Hexose oxidase (HOX), found in Chondrus crispus (Carrageen Irish moss).